Consider the following 112-residue polypeptide: uncharacterized protein (112 aa).

The first 21 residues, 1 to 21 (MKTLFTSVVLCGALVVSSSFA), serve as a signal peptide directing secretion. 2 consecutive HhH domains span residues 49-79 (DKLN…IVQY) and 80-109 (REKH…NRDR).

This is an uncharacterized protein from Haemophilus influenzae (strain ATCC 51907 / DSM 11121 / KW20 / Rd).